Here is a 121-residue protein sequence, read N- to C-terminus: Large ribosomal subunit protein bL31 (121 aa).

The large ribosomal subunit protein bL31 stretch occupies residues 1–97 (MKEGIHPDYK…AKENRAAKRA (97 aa)). C16, C18, C36, and C39 together coordinate Zn(2+). A compositionally biased stretch (low complexity) spans 65-80 (ATPAKAEPAKKAPAAE). Residues 65–121 (ATPAKAEPAKKAPAAEPAKKVEAAKENRAAKRAKAGKSKKSEAAPAAEAPAADAKPE) form a disordered region. Residues 74–121 (KKAPAAEPAKKVEAAKENRAAKRAKAGKSKKSEAAPAAEAPAADAKPE) form a unknown region. A compositionally biased stretch (basic and acidic residues) spans 81-93 (PAKKVEAAKENRA). Positions 107–121 (AAPAAEAPAADAKPE) are enriched in low complexity.

It belongs to the bacterial ribosomal protein bL31 family. Type A subfamily. Part of the 50S ribosomal subunit. Requires Zn(2+) as cofactor.

Binds the 23S rRNA. This chain is Large ribosomal subunit protein bL31, found in Anaeromyxobacter dehalogenans (strain 2CP-C).